A 490-amino-acid chain; its full sequence is RNA-binding post-transcriptional regulator cip1 (490 aa).

Disordered stretches follow at residues 16–63 (RGLA…GSSA), 76–97 (ASSRAASPAPSDSFPTFGYSQL), and 138–199 (HNVS…GEDT). Residues 34–62 (RLQSPLNSPKLQPIGSPQASRKTSGSGSS) are compositionally biased toward polar residues. Phosphoserine is present on residues Ser37, Ser41, Ser49, Ser86, and Ser141. Composition is skewed to low complexity over residues 76 to 88 (ASSRAASPAPSDS) and 141 to 160 (SPPSGAESSSESKSFSASGK). Residues 164–192 (ADTSAEPSLDAFNSTQIKAGSTANSNSTP) are compositionally biased toward polar residues. An RRM domain is found at 202–280 (TAIVVKNIPF…RRLRVEWKRQ (79 aa)). Phosphoserine is present on residues Ser397, Ser401, and Ser427. Thr431 carries the post-translational modification Phosphothreonine. Phosphoserine occurs at positions 435, 456, and 466. The interval 457–490 (PLQKASTLSSPFNSKNDNDASTSASKQSFGVSHF) is disordered.

Interacts with csx1. Phosphorylated by sty1.

The protein localises to the cytoplasm. Functionally, regulates global gene expression after oxidative stress. Interacts and stabilizes mRNAs and may regulate their transition between different cytoplasmic components after oxidative stress. The sequence is that of RNA-binding post-transcriptional regulator cip1 (cip1) from Schizosaccharomyces pombe (strain 972 / ATCC 24843) (Fission yeast).